Reading from the N-terminus, the 434-residue chain is Adenylosuccinate synthetase (434 aa).

Residues 12–18 and 40–42 contribute to the GTP site; these read GDEGKGK and GHT. The active-site Proton acceptor is the aspartate 13. Residues aspartate 13 and glycine 40 each coordinate Mg(2+). IMP contacts are provided by residues 13–16, 38–41, threonine 129, arginine 143, glutamine 224, threonine 239, and arginine 303; these read DEGK and NAGH. Histidine 41 serves as the catalytic Proton donor. 299 to 305 serves as a coordination point for substrate; it reads AVTGRPR. GTP-binding positions include arginine 305, 331–333, and 413–415; these read KLD and STG.

It belongs to the adenylosuccinate synthetase family. As to quaternary structure, homodimer. Requires Mg(2+) as cofactor.

It is found in the cytoplasm. The catalysed reaction is IMP + L-aspartate + GTP = N(6)-(1,2-dicarboxyethyl)-AMP + GDP + phosphate + 2 H(+). It functions in the pathway purine metabolism; AMP biosynthesis via de novo pathway; AMP from IMP: step 1/2. In terms of biological role, plays an important role in the de novo pathway of purine nucleotide biosynthesis. Catalyzes the first committed step in the biosynthesis of AMP from IMP. This Solibacter usitatus (strain Ellin6076) protein is Adenylosuccinate synthetase.